Consider the following 229-residue polypeptide: Large ribosomal subunit protein uL1 (229 aa).

This sequence belongs to the universal ribosomal protein uL1 family. Part of the 50S ribosomal subunit.

Binds directly to 23S rRNA. The L1 stalk is quite mobile in the ribosome, and is involved in E site tRNA release. Its function is as follows. Protein L1 is also a translational repressor protein, it controls the translation of the L11 operon by binding to its mRNA. The protein is Large ribosomal subunit protein uL1 of Bifidobacterium animalis subsp. lactis (strain AD011).